Reading from the N-terminus, the 469-residue chain is Glutamine synthetase (469 aa).

Residues 13 to 97 form the GS beta-grasp domain; that stretch reads HEVKFVDLRF…IRCDILEPGT (85 aa). The GS catalytic domain maps to 105–469; the sequence is PRSIAKRAED…PVEFELYYSV (365 aa). The Mg(2+) site is built by E130 and E132. E208 provides a ligand contact to ATP. Residues E213 and E221 each contribute to the Mg(2+) site. L-glutamate is bound by residues 265 to 266 and G266; that span reads NG. H270 lines the Mg(2+) pocket. ATP contacts are provided by residues 272-274 and S274; that span reads HMS. The L-glutamate site is built by R322, E328, and R340. R340, R345, and K353 together coordinate ATP. E358 contacts Mg(2+). Position 360 (R360) interacts with L-glutamate. Residue Y398 is modified to O-AMP-tyrosine.

Belongs to the glutamine synthetase family. In terms of assembly, oligomer of 12 subunits arranged in the form of two hexagons. The cofactor is Mn(2+).

Its subcellular location is the cytoplasm. The catalysed reaction is L-glutamate + NH4(+) + ATP = L-glutamine + ADP + phosphate + H(+). Its activity is regulated as follows. When cellular nitrogen levels are high, the C-terminal adenylyl transferase (AT) of GlnE inhibits GlnA by covalent transfer of an adenylyl group from ATP to Tyr-398. Conversely, when nitrogen levels are low, the N-terminal adenylyl removase (AR) of GlnE activates GlnA by removing the adenylyl group by phosphorolysis. The fully adenylated enzyme complex is inactive. In terms of biological role, catalyzes the ATP-dependent biosynthesis of glutamine from glutamate and ammonia. In Salmonella typhi, this protein is Glutamine synthetase.